The following is a 313-amino-acid chain: Nucleoside diphosphate-linked moiety X motif 6 (313 aa).

A Nudix hydrolase domain is found at 138-270; that stretch reads THQVGVAGAV…TSRVARLLLY (133 aa).

The protein belongs to the Nudix hydrolase family. Monomer and homodimer.

It is found in the cytoplasm. It localises to the nucleus. The protein resides in the mitochondrion. In terms of biological role, may contribute to the regulation of cell proliferation. This Mus musculus (Mouse) protein is Nucleoside diphosphate-linked moiety X motif 6 (Nudt6).